A 109-amino-acid chain; its full sequence is Cell division protein FtsL (109 aa).

At 1-3 (MSR) the chain is on the cytoplasmic side. The chain crosses the membrane as a helical span at residues 4-21 (LNIFLLIIVMGCALSVVN). The Periplasmic segment spans residues 22–109 (STNQQRQIFI…ASAAPTGGAR (88 aa)).

This sequence belongs to the FtsL family. As to quaternary structure, part of a complex composed of FtsB, FtsL and FtsQ.

It is found in the cell inner membrane. Functionally, essential cell division protein. May link together the upstream cell division proteins, which are predominantly cytoplasmic, with the downstream cell division proteins, which are predominantly periplasmic. The sequence is that of Cell division protein FtsL from Burkholderia pseudomallei (strain K96243).